An 885-amino-acid polypeptide reads, in one-letter code: Alanine--tRNA ligase (885 aa).

The Zn(2+) site is built by His563, His567, Cys677, and His681. The disordered stretch occupies residues 848-868 (LGGKGGGGRPDRAQGGAPSLA).

The protein belongs to the class-II aminoacyl-tRNA synthetase family. It depends on Zn(2+) as a cofactor.

It localises to the cytoplasm. The enzyme catalyses tRNA(Ala) + L-alanine + ATP = L-alanyl-tRNA(Ala) + AMP + diphosphate. Functionally, catalyzes the attachment of alanine to tRNA(Ala) in a two-step reaction: alanine is first activated by ATP to form Ala-AMP and then transferred to the acceptor end of tRNA(Ala). Also edits incorrectly charged Ser-tRNA(Ala) and Gly-tRNA(Ala) via its editing domain. The sequence is that of Alanine--tRNA ligase from Paracoccus denitrificans (strain Pd 1222).